An 878-amino-acid polypeptide reads, in one-letter code: DNA mismatch repair protein MutS (878 aa).

630–637 (GPNMAGKS) lines the ATP pocket.

The protein belongs to the DNA mismatch repair MutS family.

Its function is as follows. This protein is involved in the repair of mismatches in DNA. It is possible that it carries out the mismatch recognition step. This protein has a weak ATPase activity. The polypeptide is DNA mismatch repair protein MutS (Chlorobaculum tepidum (strain ATCC 49652 / DSM 12025 / NBRC 103806 / TLS) (Chlorobium tepidum)).